Here is a 21-residue protein sequence, read N- to C-terminus: Ocellatin-3 (21 aa).

Position 21 is an isoleucine amide (I21).

In terms of tissue distribution, expressed by the skin dorsal glands.

The protein resides in the secreted. In terms of biological role, has hemolytic activity against human erythrocytes and antibacterial activity against the Gram-negative bacterium E.coli. The sequence is that of Ocellatin-3 from Leptodactylus ocellatus (Argus frog).